The following is a 357-amino-acid chain: UPF0283 membrane protein BOV_0999 (357 aa).

Positions 1–36 (MSDKTPRKPTAFRLEQPARVSAASEQEEPRRPRAVK) are disordered. Residues 27 to 36 (EEPRRPRAVK) are compositionally biased toward basic and acidic residues. 2 helical membrane passes run 78 to 98 (ILFG…TEDL) and 109 to 129 (LGWT…AIIL).

This sequence belongs to the UPF0283 family.

The protein resides in the cell inner membrane. This Brucella ovis (strain ATCC 25840 / 63/290 / NCTC 10512) protein is UPF0283 membrane protein BOV_0999.